The primary structure comprises 264 residues: tRNA (guanine-N(1)-)-methyltransferase (264 aa).

S-adenosyl-L-methionine is bound by residues Gly120 and 140–145 (IGDYVL).

Belongs to the RNA methyltransferase TrmD family. Homodimer.

The protein resides in the cytoplasm. It carries out the reaction guanosine(37) in tRNA + S-adenosyl-L-methionine = N(1)-methylguanosine(37) in tRNA + S-adenosyl-L-homocysteine + H(+). Specifically methylates guanosine-37 in various tRNAs. The protein is tRNA (guanine-N(1)-)-methyltransferase of Halorhodospira halophila (strain DSM 244 / SL1) (Ectothiorhodospira halophila (strain DSM 244 / SL1)).